Here is a 236-residue protein sequence, read N- to C-terminus: Lipoprotein signal peptidase (236 aa).

4 helical membrane-spanning segments follow: residues F8–F28, W44–T64, V68–L88, and L98–F118. Active-site residues include D141 and D174. Residues C166–L186 traverse the membrane as a helical segment.

This sequence belongs to the peptidase A8 family.

The protein resides in the cell inner membrane. It carries out the reaction Release of signal peptides from bacterial membrane prolipoproteins. Hydrolyzes -Xaa-Yaa-Zaa-|-(S,diacylglyceryl)Cys-, in which Xaa is hydrophobic (preferably Leu), and Yaa (Ala or Ser) and Zaa (Gly or Ala) have small, neutral side chains.. Its pathway is protein modification; lipoprotein biosynthesis (signal peptide cleavage). In terms of biological role, this protein specifically catalyzes the removal of signal peptides from prolipoproteins. This is Lipoprotein signal peptidase from Amoebophilus asiaticus (strain 5a2).